A 92-amino-acid chain; its full sequence is Small ribosomal subunit protein uS19 (92 aa).

The protein belongs to the universal ribosomal protein uS19 family.

Its function is as follows. Protein S19 forms a complex with S13 that binds strongly to the 16S ribosomal RNA. The protein is Small ribosomal subunit protein uS19 of Desulfatibacillum aliphaticivorans.